The primary structure comprises 180 residues: NADH-ubiquinone oxidoreductase chain 5 (180 aa).

A helical membrane pass occupies residues 131 to 148 (VYHYAFAMLLGSTPFVTF).

Belongs to the complex I subunit 5 family.

The protein localises to the mitochondrion inner membrane. The enzyme catalyses a ubiquinone + NADH + 5 H(+)(in) = a ubiquinol + NAD(+) + 4 H(+)(out). Its function is as follows. Core subunit of the mitochondrial membrane respiratory chain NADH dehydrogenase (Complex I) that is believed to belong to the minimal assembly required for catalysis. Complex I functions in the transfer of electrons from NADH to the respiratory chain. The immediate electron acceptor for the enzyme is believed to be ubiquinone. The polypeptide is NADH-ubiquinone oxidoreductase chain 5 (ND5) (Zea mays (Maize)).